Consider the following 206-residue polypeptide: Orotate phosphoribosyltransferase (206 aa).

5-phospho-alpha-D-ribose 1-diphosphate contacts are provided by residues Arg93, Lys97, His99, and 119–127 (EDLISTGGT). Ser123 is an orotate binding site.

Belongs to the purine/pyrimidine phosphoribosyltransferase family. PyrE subfamily. In terms of assembly, homodimer. Mg(2+) serves as cofactor.

The catalysed reaction is orotidine 5'-phosphate + diphosphate = orotate + 5-phospho-alpha-D-ribose 1-diphosphate. It functions in the pathway pyrimidine metabolism; UMP biosynthesis via de novo pathway; UMP from orotate: step 1/2. Its function is as follows. Catalyzes the transfer of a ribosyl phosphate group from 5-phosphoribose 1-diphosphate to orotate, leading to the formation of orotidine monophosphate (OMP). This chain is Orotate phosphoribosyltransferase, found in Bacillus caldolyticus.